Reading from the N-terminus, the 138-residue chain is Large ribosomal subunit protein bL17 (138 aa).

The protein belongs to the bacterial ribosomal protein bL17 family. In terms of assembly, part of the 50S ribosomal subunit. Contacts protein L32.

The polypeptide is Large ribosomal subunit protein bL17 (Solidesulfovibrio magneticus (strain ATCC 700980 / DSM 13731 / RS-1) (Desulfovibrio magneticus)).